A 210-amino-acid chain; its full sequence is Outer-membrane lipoprotein carrier protein (210 aa).

The N-terminal stretch at 1-23 (MLMFSRFRYIFFAVALLSGPVCA) is a signal peptide.

The protein belongs to the LolA family. In terms of assembly, monomer.

It is found in the periplasm. Functionally, participates in the translocation of lipoproteins from the inner membrane to the outer membrane. Only forms a complex with a lipoprotein if the residue after the N-terminal Cys is not an aspartate (The Asp acts as a targeting signal to indicate that the lipoprotein should stay in the inner membrane). This Xylella fastidiosa (strain Temecula1 / ATCC 700964) protein is Outer-membrane lipoprotein carrier protein.